Consider the following 522-residue polypeptide: Ribonuclease Y (522 aa).

Residues W2–L22 form a helical membrane-spanning segment. The 67-residue stretch at L212–D278 folds into the KH domain. One can recognise an HD domain in the interval A338–A431.

This sequence belongs to the RNase Y family.

It localises to the cell membrane. Functionally, endoribonuclease that initiates mRNA decay. In Nitratiruptor sp. (strain SB155-2), this protein is Ribonuclease Y.